The following is a 422-amino-acid chain: Zinc finger and BTB domain-containing protein 42 (422 aa).

The BTB domain maps to 24–92 (CDCTVLVGDA…MYEGRLDLRS (69 aa)). Disordered stretches follow at residues 121-141 (KDRSLDPGNPAPGAEPAQPPC), 166-188 (AALPPRASGPPPCQVPEESDQAL), and 207-256 (LQTP…AAKG). Pro residues predominate over residues 243-252 (HSPPKPPPVP). 4 C2H2-type zinc fingers span residues 294 to 316 (CICPLCSKLFPSSHVLQLHLSAH), 334 to 356 (PTCPLCGKTFSCTYTLKRHERTH), 362 to 384 (YTCVQCGKSFQYSHNLSRHTVVH), and 390 to 413 (HACRWCERRFTQSGDLYRHVRKFH).

The protein belongs to the krueppel C2H2-type zinc-finger protein family. ZBTB18 subfamily. As to expression, expressed in skeletal muscle (at protein level).

Its subcellular location is the cytoplasm. It is found in the nucleus. It localises to the nucleoplasm. Transcriptional repressor. Specifically binds DNA and probably acts by recruiting chromatin remodeling multiprotein complexes. The polypeptide is Zinc finger and BTB domain-containing protein 42 (ZBTB42) (Homo sapiens (Human)).